The following is a 523-amino-acid chain: Putative pentatricopeptide repeat-containing protein At3g15200 (523 aa).

PPR repeat units lie at residues 142-172, 177-211, 212-242, 246-280, 281-315, 316-350, 351-385, 388-418, 420-454, and 455-489; these read SSML…MSKR, NEKT…GIDD, DLVA…RRRE, DIKA…KCRP, DVVS…RRNP, DVKI…GPDP, NVVT…GGSC, NDVT…NKCE, TSDL…GLGP, and DQRT…GMVP. The tract at residues 497 to 523 is disordered; sequence LNQNKTKPRVEDKMLRSNLTSEESESD.

It belongs to the PPR family. P subfamily.

This Arabidopsis thaliana (Mouse-ear cress) protein is Putative pentatricopeptide repeat-containing protein At3g15200.